Here is a 122-residue protein sequence, read N- to C-terminus: Small ribosomal subunit protein uS13 (122 aa).

The interval 95–122 is disordered; it reads GLPVRGQKTKTNARTRKGPKRTVANKKK.

Belongs to the universal ribosomal protein uS13 family. As to quaternary structure, part of the 30S ribosomal subunit. Forms a loose heterodimer with protein S19. Forms two bridges to the 50S subunit in the 70S ribosome.

Its function is as follows. Located at the top of the head of the 30S subunit, it contacts several helices of the 16S rRNA. In the 70S ribosome it contacts the 23S rRNA (bridge B1a) and protein L5 of the 50S subunit (bridge B1b), connecting the 2 subunits; these bridges are implicated in subunit movement. Contacts the tRNAs in the A and P-sites. In Agathobacter rectalis (strain ATCC 33656 / DSM 3377 / JCM 17463 / KCTC 5835 / VPI 0990) (Eubacterium rectale), this protein is Small ribosomal subunit protein uS13.